We begin with the raw amino-acid sequence, 477 residues long: UDP-N-acetylmuramate--L-alanine ligase (477 aa).

112–118 (GTHGKTT) contributes to the ATP binding site.

Belongs to the MurCDEF family.

The protein resides in the cytoplasm. The catalysed reaction is UDP-N-acetyl-alpha-D-muramate + L-alanine + ATP = UDP-N-acetyl-alpha-D-muramoyl-L-alanine + ADP + phosphate + H(+). It functions in the pathway cell wall biogenesis; peptidoglycan biosynthesis. Its function is as follows. Cell wall formation. This is UDP-N-acetylmuramate--L-alanine ligase from Verminephrobacter eiseniae (strain EF01-2).